A 77-amino-acid polypeptide reads, in one-letter code: Putative antitoxin VapB3 (77 aa).

The stretch at 10-60 (RRGLKKELEELGINYAEAVRKFLEELVARERRRRALERARALREELRKKGA) forms a coiled coil.

As to quaternary structure, forms a complex with putative toxin VapC3, possibly VapB(2)-VapC(2).

Functionally, antitoxin component of a type II toxin-antitoxin (TA) system. In Pyrobaculum aerophilum (strain ATCC 51768 / DSM 7523 / JCM 9630 / CIP 104966 / NBRC 100827 / IM2), this protein is Putative antitoxin VapB3 (vAPb3).